The chain runs to 213 residues: Transcriptional regulatory protein YdfI (213 aa).

One can recognise a Response regulatory domain in the interval 3–118 (KVLIVDDHLV…TLFHTMDAAI (116 aa)). Aspartate 54 is subject to 4-aspartylphosphate. An HTH luxR-type domain is found at 142-207 (KQRNETQLTE…EAVTIAMQKG (66 aa)). Positions 166 to 185 (SKAIAFDLGVSERTVKSRLT) form a DNA-binding region, H-T-H motif.

Post-translationally, phosphorylated by YdfH.

It is found in the cytoplasm. In terms of biological role, member of the two-component regulatory system YdfH/YdfI. Regulates the transcription of ydfJ by binding to its promoter region. The chain is Transcriptional regulatory protein YdfI (ydfI) from Bacillus subtilis (strain 168).